Here is a 156-residue protein sequence, read N- to C-terminus: Small ribosomal subunit protein uS7c (156 aa).

It belongs to the universal ribosomal protein uS7 family. In terms of assembly, part of the 30S ribosomal subunit.

The protein resides in the plastid. It is found in the chloroplast. One of the primary rRNA binding proteins, it binds directly to 16S rRNA where it nucleates assembly of the head domain of the 30S subunit. This Nephroselmis olivacea (Green alga) protein is Small ribosomal subunit protein uS7c (rps7).